Consider the following 279-residue polypeptide: DegV domain-containing protein lmo1863 (279 aa).

The 275-residue stretch at 4 to 278 (IKIITDSTAG…TGAFAFMYYT (275 aa)) folds into the DegV domain. The hexadecanoate site is built by S62 and S94.

May bind long-chain fatty acids, such as palmitate, and may play a role in lipid transport or fatty acid metabolism. The sequence is that of DegV domain-containing protein lmo1863 from Listeria monocytogenes serovar 1/2a (strain ATCC BAA-679 / EGD-e).